Reading from the N-terminus, the 325-residue chain is Beta-ketoacyl-[acyl-carrier-protein] synthase III (325 aa).

Residues cysteine 119 and histidine 252 contribute to the active site. The segment at 253–257 (QANIR) is ACP-binding. Asparagine 282 is a catalytic residue.

This sequence belongs to the thiolase-like superfamily. FabH family. Homodimer.

The protein resides in the cytoplasm. The catalysed reaction is malonyl-[ACP] + acetyl-CoA + H(+) = 3-oxobutanoyl-[ACP] + CO2 + CoA. Its pathway is lipid metabolism; fatty acid biosynthesis. In terms of biological role, catalyzes the condensation reaction of fatty acid synthesis by the addition to an acyl acceptor of two carbons from malonyl-ACP. Catalyzes the first condensation reaction which initiates fatty acid synthesis and may therefore play a role in governing the total rate of fatty acid production. Possesses both acetoacetyl-ACP synthase and acetyl transacylase activities. Its substrate specificity determines the biosynthesis of branched-chain and/or straight-chain of fatty acids. The protein is Beta-ketoacyl-[acyl-carrier-protein] synthase III of Paracidovorax citrulli (strain AAC00-1) (Acidovorax citrulli).